Reading from the N-terminus, the 457-residue chain is Dihydrolipoyl dehydrogenase (457 aa).

FAD contacts are provided by residues Glu-32–Cys-40, Lys-49, and Ala-113. Cys-40 and Cys-45 are oxidised to a cystine. NAD(+)-binding positions include Gly-178–Ile-182, Val-235, and Ser-262–Arg-265. 2 residues coordinate FAD: Asp-303 and Ala-311. The active-site Proton acceptor is His-437.

It belongs to the class-I pyridine nucleotide-disulfide oxidoreductase family. In terms of assembly, homodimer. The cofactor is FAD.

The protein localises to the cytoplasm. It carries out the reaction N(6)-[(R)-dihydrolipoyl]-L-lysyl-[protein] + NAD(+) = N(6)-[(R)-lipoyl]-L-lysyl-[protein] + NADH + H(+). Functionally, lipoamide dehydrogenase is a component of the alpha-ketoacid dehydrogenase complexes. The sequence is that of Dihydrolipoyl dehydrogenase (pdhD) from Mycoplasma genitalium (strain ATCC 33530 / DSM 19775 / NCTC 10195 / G37) (Mycoplasmoides genitalium).